A 34-amino-acid chain; its full sequence is uncharacterized protein (34 aa).

This is an uncharacterized protein from Haemophilus influenzae (strain ATCC 51907 / DSM 11121 / KW20 / Rd).